A 495-amino-acid polypeptide reads, in one-letter code: Acyltransferase abl6 (495 aa).

Catalysis depends on H171, which acts as the Proton acceptor.

Belongs to the plant acyltransferase family.

Acyltransferase; part of the gene cluster that mediates the biosynthesis of abscisic acid (ABA), a phytohormone that acts antagonistically toward salicylic acid (SA), jasmonic acid (JA) and ethylene (ETH) signaling, to impede plant defense responses. The first step of the pathway catalyzes the reaction from farnesyl diphosphate to alpha-ionylideneethane performed by the alpha-ionylideneethane synthase abl3 via a three-step reaction mechanism involving 2 neutral intermediates, beta-farnesene and allofarnesene. The cytochrome P450 monooxygenase abl1 might then be involved in the conversion of alpha-ionylideneethane to alpha-ionylideneacetic acid. Alpha-ionylideneacetic acid is further converted to abscisic acid in 2 steps involving the cytochrome P450 monooxygenase abl2 and the short-chain dehydrogenase/reductase abl4, via the intermediates 1'-deoxy-ABA or 1',4'-trans-diol-ABA, depending on the order of action of these 2 enzymes. Abl2 is responsible for the hydroxylation of carbon atom C-1' and abl4 might be involved in the oxidation of the C-4' carbon atom. The acyltransferase abl6 seems not essential for the biosynthesis of ABA, but it may acetylate ABA as part of the synthesis of another ABA-related molecule. This is Acyltransferase abl6 from Leptosphaeria maculans (strain JN3 / isolate v23.1.3 / race Av1-4-5-6-7-8) (Blackleg fungus).